The sequence spans 120 residues: MKHRKGRVEGEILRELTKIIRKNIRDPRVSNVTFTAVECSNDFSYATVYYSLLTEDEQAQKEAEAGLEKAKGTMRHLLGQSLTMYKVPELIFKRDQSVIYGSKIDRLLADLKKQEQDRQN.

Belongs to the RbfA family. Monomer. Binds 30S ribosomal subunits, but not 50S ribosomal subunits or 70S ribosomes.

It localises to the cytoplasm. Its function is as follows. One of several proteins that assist in the late maturation steps of the functional core of the 30S ribosomal subunit. Associates with free 30S ribosomal subunits (but not with 30S subunits that are part of 70S ribosomes or polysomes). Required for efficient processing of 16S rRNA. May interact with the 5'-terminal helix region of 16S rRNA. The chain is Ribosome-binding factor A from Lactobacillus delbrueckii subsp. bulgaricus (strain ATCC 11842 / DSM 20081 / BCRC 10696 / JCM 1002 / NBRC 13953 / NCIMB 11778 / NCTC 12712 / WDCM 00102 / Lb 14).